A 421-amino-acid polypeptide reads, in one-letter code: Gamma-glutamyl phosphate reductase (421 aa).

Belongs to the gamma-glutamyl phosphate reductase family.

It localises to the cytoplasm. The enzyme catalyses L-glutamate 5-semialdehyde + phosphate + NADP(+) = L-glutamyl 5-phosphate + NADPH + H(+). The protein operates within amino-acid biosynthesis; L-proline biosynthesis; L-glutamate 5-semialdehyde from L-glutamate: step 2/2. Its function is as follows. Catalyzes the NADPH-dependent reduction of L-glutamate 5-phosphate into L-glutamate 5-semialdehyde and phosphate. The product spontaneously undergoes cyclization to form 1-pyrroline-5-carboxylate. The protein is Gamma-glutamyl phosphate reductase of Pseudomonas aeruginosa (strain LESB58).